We begin with the raw amino-acid sequence, 274 residues long: Thymidylate synthase (274 aa).

Residue arginine 21 participates in dUMP binding. Histidine 51 serves as a coordination point for (6R)-5,10-methylene-5,6,7,8-tetrahydrofolate. DUMP is bound at residue 123–124; it reads RR. Cysteine 156 functions as the Nucleophile in the catalytic mechanism. Residues 176–179, asparagine 187, and 217–219 each bind dUMP; these read RSAD and HIY. Aspartate 179 contacts (6R)-5,10-methylene-5,6,7,8-tetrahydrofolate. Serine 273 contributes to the (6R)-5,10-methylene-5,6,7,8-tetrahydrofolate binding site.

The protein belongs to the thymidylate synthase family. Bacterial-type ThyA subfamily. Homodimer.

It localises to the cytoplasm. The enzyme catalyses dUMP + (6R)-5,10-methylene-5,6,7,8-tetrahydrofolate = 7,8-dihydrofolate + dTMP. It functions in the pathway pyrimidine metabolism; dTTP biosynthesis. In terms of biological role, catalyzes the reductive methylation of 2'-deoxyuridine-5'-monophosphate (dUMP) to 2'-deoxythymidine-5'-monophosphate (dTMP) while utilizing 5,10-methylenetetrahydrofolate (mTHF) as the methyl donor and reductant in the reaction, yielding dihydrofolate (DHF) as a by-product. This enzymatic reaction provides an intracellular de novo source of dTMP, an essential precursor for DNA biosynthesis. In Francisella philomiragia subsp. philomiragia (strain ATCC 25017 / CCUG 19701 / FSC 153 / O#319-036), this protein is Thymidylate synthase.